A 496-amino-acid polypeptide reads, in one-letter code: Maturase K (496 aa).

This sequence belongs to the intron maturase 2 family. MatK subfamily.

It is found in the plastid. The protein localises to the chloroplast. In terms of biological role, usually encoded in the trnK tRNA gene intron. Probably assists in splicing its own and other chloroplast group II introns. The chain is Maturase K from Paeonia lactiflora (Chinese peony).